Here is a 157-residue protein sequence, read N- to C-terminus: Type II restriction enzyme PvuII (157 aa).

Mg(2+)-binding residues include Asp58 and Glu68.

Homodimer. Requires Mg(2+) as cofactor.

The catalysed reaction is Endonucleolytic cleavage of DNA to give specific double-stranded fragments with terminal 5'-phosphates.. Its function is as follows. A P subtype restriction enzyme that recognizes the double-stranded sequence 5'-CAGCTG-3' and cleaves after G-3. The chain is Type II restriction enzyme PvuII (pvuIIR) from Proteus hauseri.